The chain runs to 235 residues: MAKLGKRLKKAVSTVDRDKFYALDEAVKTVRSNATAKFDETVEIAMNLGIDPRHADQMVRGMVQLPNGTGKTVRVAVFARAGKADEALAAGADIVGAEDLADKIQAGEFNFDRCIATPDMMGVVGRLGKILGPRGLMPNPKLGTVTPNVAEAVKAAKGGAVEFRAEKTGIVHAGVGKASFSEQALEENIRAFVSAINRAKPSGAKGTYIEKVSLSSTMGPGIKLDIPALVASLGG.

The protein belongs to the universal ribosomal protein uL1 family. Part of the 50S ribosomal subunit.

Its function is as follows. Binds directly to 23S rRNA. The L1 stalk is quite mobile in the ribosome, and is involved in E site tRNA release. In terms of biological role, protein L1 is also a translational repressor protein, it controls the translation of the L11 operon by binding to its mRNA. The protein is Large ribosomal subunit protein uL1 of Rhodospirillum centenum (strain ATCC 51521 / SW).